Reading from the N-terminus, the 509-residue chain is Probable cytochrome P450 4ac1 (509 aa).

2 residues coordinate heme: E317 and C454.

This sequence belongs to the cytochrome P450 family. It depends on heme as a cofactor.

The protein resides in the endoplasmic reticulum membrane. Its subcellular location is the microsome membrane. In terms of biological role, may be involved in the metabolism of insect hormones and in the breakdown of synthetic insecticides. The protein is Probable cytochrome P450 4ac1 (Cyp4ac1) of Drosophila melanogaster (Fruit fly).